Consider the following 276-residue polypeptide: MAAIDGLPPLRDVIQRHGLDAKKSLGQNFLFDLNLTQKIARTAGPLDGVTVIEVGPGPGGLTRAILSLGAKKVIAVERDSRCLPVLAEIEAHYPGRLEVIEGDALKTDFEALVPAGEPVRIIANLPYNVGTQLLVNWLLPREWPPFWLSMTLMFQKEVGQRIVAEEGDNHYGRLGVLAGWRTVSEMAFDVPPQAFSPPPKVTSTVVHLLPKDKPLPCDVAKLERVTEAAFGQRRKMLRQSVKSLGGETLLEKAGIDPTRRAETLSVEEFVTLANCL.

S-adenosyl-L-methionine is bound by residues asparagine 28, leucine 30, glycine 55, glutamate 77, aspartate 103, and asparagine 124.

Belongs to the class I-like SAM-binding methyltransferase superfamily. rRNA adenine N(6)-methyltransferase family. RsmA subfamily.

The protein localises to the cytoplasm. It carries out the reaction adenosine(1518)/adenosine(1519) in 16S rRNA + 4 S-adenosyl-L-methionine = N(6)-dimethyladenosine(1518)/N(6)-dimethyladenosine(1519) in 16S rRNA + 4 S-adenosyl-L-homocysteine + 4 H(+). Functionally, specifically dimethylates two adjacent adenosines (A1518 and A1519) in the loop of a conserved hairpin near the 3'-end of 16S rRNA in the 30S particle. May play a critical role in biogenesis of 30S subunits. The chain is Ribosomal RNA small subunit methyltransferase A from Agrobacterium fabrum (strain C58 / ATCC 33970) (Agrobacterium tumefaciens (strain C58)).